Consider the following 130-residue polypeptide: P antigen family member 5 (130 aa).

Disordered stretches follow at residues 1-88 and 101-130; these read MQAP…TDVE and DAPGDGPDVREGTLPTFDPTKVLEAGEGQL. Residues 14-26 are compositionally biased toward basic and acidic residues; sequence TREEVRDMSEHVT. The span at 27-42 shows a compositional bias: polar residues; it reads RSQSSERGNDQESSQP. A phosphothreonine mark is found at Thr-113 and Thr-116.

Belongs to the GAGE family.

The chain is P antigen family member 5 (PAGE5) from Homo sapiens (Human).